The sequence spans 319 residues: MPGRAAHQEAAAAGGAAAEPTAAGGSAGAVAQQPEQQGLAGAFPLVLKKLMENPPRDARLDKEKKIKLEEDEAAAASTMAVSASLMPPIWDKTIPYDGESFHLEYMDLDEFLLENGIPSSPTHLDLNQNPLMPVAKLEEKEPASASTGSPVSSSSTAVYQQSEAASSTESPPQNERNTPSPIDPDCVEVEVNFNPDPADLVLSSVPGGELFNPRKHKFTEEDLKPQPMIKKAKKVFVPDEQKDEKYWTRRKKNNVAAKRSRDARRLKENQITIRAAFLEKENTALRTEVAELRKEVGRCKNIVSKYETRYGPFDLSDSE.

2 stretches are compositionally biased toward low complexity: residues 1–31 (MPGR…GAVA) and 143–158 (ASAS…STAV). 2 disordered regions span residues 1–35 (MPGR…QQPE) and 139–186 (EKEP…DPDC). The segment covering 159–180 (YQQSEAASSTESPPQNERNTPS) has biased composition (polar residues). Positions 243 to 306 (DEKYWTRRKK…GRCKNIVSKY (64 aa)) constitute a bZIP domain. Positions 245–265 (KYWTRRKKNNVAAKRSRDARR) are basic motif. Residues 266-273 (LKENQITI) are leucine-zipper.

Belongs to the bZIP family. PAR subfamily. As to quaternary structure, binds DNA as a homodimer or a heterodimer. Exists as a stable dimer in the absence of DNA. As to expression, isoform 1 and isoform 3 are expressed in a variety of somatic tissues, including liver, heart, intestine, stomach and kidney. Both isoforms are also expressed in hepatoma (LMH) cells and in embryonic fibroblast cell lines. Isoform 2 and isoform 4 are expressed in adult heart and intestine.

It localises to the nucleus. Functionally, transcription factor that binds to and transactivates the vitellogenin II (VTG2) promoter. Binds to the palindromic sequence 5'-GTTTACATAAAC-3'. The protein is Transcription factor VBP (TEF) of Gallus gallus (Chicken).